The chain runs to 351 residues: Trans-enoyl reductase grgB (351 aa).

One can recognise an Enoyl reductase (ER) domain in the interval 10-346; that stretch reads GAESGGYRLA…GKVHAKKLVV (337 aa). Residues 161-164, 184-187, Tyr202, 249-250, and 339-340 contribute to the NADP(+) site; these read ATAT, SPAN, LE, and VH.

This sequence belongs to the zinc-containing alcohol dehydrogenase family.

It participates in secondary metabolite biosynthesis. Its function is as follows. Trans-enoyl reductase; part of the gene cluster that mediates the biosynthesis of gregatin A, a fungal polyketide featuring an alkylated furanone core. The PKS grgA synthesizes C11 and C4 polyketide chains in the presence and absence of the trans-enoyl reductase grgB, respectively. The polyketide transferase grgF is then responsible for the fusion of the two carbon chains to produce the furanone skeleton of gregatin A. Next, the cytochrome P450 monooxygenase grgG accepts performs the oxidative cyclization to furnish the gregatin scaffold and leads to the formation of desmethylgregatin A. Finally, the O-methyltransferase grgD methylates the carboxyl group of desmethylgregatin A to provide gregatin A. The protein is Trans-enoyl reductase grgB of Penicillium sp.